A 511-amino-acid chain; its full sequence is Histidine ammonia-lyase (511 aa).

A cross-link (5-imidazolinone (Ala-Gly)) is located at residues 142-144 (ASG). At Ser143 the chain carries 2,3-didehydroalanine (Ser).

Belongs to the PAL/histidase family. In terms of processing, contains an active site 4-methylidene-imidazol-5-one (MIO), which is formed autocatalytically by cyclization and dehydration of residues Ala-Ser-Gly.

The protein localises to the cytoplasm. It carries out the reaction L-histidine = trans-urocanate + NH4(+). Its pathway is amino-acid degradation; L-histidine degradation into L-glutamate; N-formimidoyl-L-glutamate from L-histidine: step 1/3. The protein is Histidine ammonia-lyase of Brucella suis biovar 1 (strain 1330).